The following is a 611-amino-acid chain: E-selectin (611 aa).

The first 22 residues, 1-22, serve as a signal peptide directing secretion; it reads MITSQLLPALTLVLLLFKEGGA. In terms of domain architecture, C-type lectin spans 23-140; the sequence is WSYNASTEAM…CDKKKLALCY (118 aa). Over 23–557 the chain is Extracellular; the sequence is WSYNASTEAM…CEAPTESSIP (535 aa). The N-linked (GlcNAc...) asparagine glycan is linked to Asn-26. 19 disulfide bridges follow: Cys-41/Cys-139, Cys-112/Cys-131, Cys-144/Cys-155, Cys-149/Cys-164, Cys-166/Cys-175, Cys-181/Cys-225, Cys-194/Cys-207, Cys-211/Cys-238, Cys-243/Cys-287, Cys-256/Cys-269, Cys-273/Cys-300, Cys-305/Cys-350, Cys-336/Cys-363, Cys-368/Cys-413, Cys-399/Cys-426, Cys-431/Cys-476, Cys-462/Cys-489, Cys-494/Cys-535, and Cys-521/Cys-548. Glu-102, Asn-104, and Glu-110 together coordinate Ca(2+). Residues 102–110, 114–119, and 127–129 contribute to the a carbohydrate site; these read EPNNKQNDE, EIYIKR, and NDE. Asn-127 and Asp-128 together coordinate Ca(2+). The 36-residue stretch at 141–176 folds into the EGF-like domain; the sequence is TAACTPTSCSGHGECVETVNNYTCKCHPGFRGLRCE. The N-linked (GlcNAc...) asparagine glycan is linked to Asn-161. Sushi domains follow at residues 179-240 and 241-302; these read VTCQ…ACNV and VECS…TCKA. The N-linked (GlcNAc...) asparagine glycan is linked to Asn-204. Residue Asn-266 is glycosylated (N-linked (GlcNAc...) asparagine). Residues Asn-313 and Asn-333 are each glycosylated (N-linked (GlcNAc...) asparagine). Sushi domains lie at 316 to 365, 367 to 428, 430 to 491, and 492 to 550; these read VSCS…VCKA, QCKA…TCEA, KCDA…SCQV, and VQCF…TCEA. Asn-528 carries an N-linked (GlcNAc...) asparagine glycan. A helical membrane pass occupies residues 558 to 579; sequence LAVGLTAGGTSLLTVASFLLWL. Topologically, residues 580-611 are cytoplasmic; that stretch reads LKRLRKRAKKFVPASSCQSLQSDGSYHMPCSI.

This sequence belongs to the selectin/LECAM family. Interacts with SELPLG/PSGL1 and PODXL2 through the sialyl Lewis X epitope. SELPLG sulfation appears not to be required for this interaction.

It is found in the cell membrane. Cell-surface glycoprotein having a role in immunoadhesion. Mediates in the adhesion of blood neutrophils in cytokine-activated endothelium through interaction with SELPLG/PSGL1. May have a role in capillary morphogenesis. The protein is E-selectin (SELE) of Canis lupus familiaris (Dog).